A 79-amino-acid polypeptide reads, in one-letter code: Serine protease inhibitor Kazal-type 1 (79 aa).

An N-terminal signal peptide occupies residues 1-23; the sequence is MKVTGIFLLSALALLSLSGNTGA. The Kazal-like domain maps to 26–79; that stretch reads LGREAKCYNELNGCTKIYDPVCGTDGNTYPNECVLCFENRKRQTSILIQKSGPC. 3 disulfides stabilise this stretch: Cys-32/Cys-61, Cys-39/Cys-58, and Cys-47/Cys-79.

The protein localises to the secreted. Its function is as follows. Serine protease inhibitor which exhibits anti-trypsin activity. In the pancreas, protects against trypsin-catalyzed premature activation of zymogens. In terms of biological role, in the male reproductive tract, binds to sperm heads where it modulates sperm capacitance by inhibiting calcium uptake and nitrogen oxide (NO) production. The sequence is that of Serine protease inhibitor Kazal-type 1 (SPINK1) from Homo sapiens (Human).